The following is a 230-amino-acid chain: Cytochrome c oxidase subunit 2 (230 aa).

Topologically, residues 1 to 14 are mitochondrial intermembrane; the sequence is MAYPLQLGFQDATS. A helical membrane pass occupies residues 15-45; sequence PIMEELLHFHDHTLMIVFLISSLVLYIISTM. Topologically, residues 46 to 59 are mitochondrial matrix; it reads LTTKLTHTNTMDAQ. The chain crosses the membrane as a helical span at residues 60–87; that stretch reads EVETIWTILPAIILILIALPSLRILYMM. Topologically, residues 88 to 230 are mitochondrial intermembrane; the sequence is DEINNPNLTI…NWTSSMMSTS (143 aa). Residues histidine 161, cysteine 196, glutamate 198, cysteine 200, histidine 204, and methionine 207 each coordinate Cu cation. Glutamate 198 contributes to the Mg(2+) binding site. A Phosphotyrosine modification is found at tyrosine 218.

Belongs to the cytochrome c oxidase subunit 2 family. As to quaternary structure, component of the cytochrome c oxidase (complex IV, CIV), a multisubunit enzyme composed of 14 subunits. The complex is composed of a catalytic core of 3 subunits MT-CO1, MT-CO2 and MT-CO3, encoded in the mitochondrial DNA, and 11 supernumerary subunits COX4I, COX5A, COX5B, COX6A, COX6B, COX6C, COX7A, COX7B, COX7C, COX8 and NDUFA4, which are encoded in the nuclear genome. The complex exists as a monomer or a dimer and forms supercomplexes (SCs) in the inner mitochondrial membrane with NADH-ubiquinone oxidoreductase (complex I, CI) and ubiquinol-cytochrome c oxidoreductase (cytochrome b-c1 complex, complex III, CIII), resulting in different assemblies (supercomplex SCI(1)III(2)IV(1) and megacomplex MCI(2)III(2)IV(2)). Found in a complex with TMEM177, COA6, COX18, COX20, SCO1 and SCO2. Interacts with TMEM177 in a COX20-dependent manner. Interacts with COX20. Interacts with COX16. The cofactor is Cu cation.

Its subcellular location is the mitochondrion inner membrane. The enzyme catalyses 4 Fe(II)-[cytochrome c] + O2 + 8 H(+)(in) = 4 Fe(III)-[cytochrome c] + 2 H2O + 4 H(+)(out). Functionally, component of the cytochrome c oxidase, the last enzyme in the mitochondrial electron transport chain which drives oxidative phosphorylation. The respiratory chain contains 3 multisubunit complexes succinate dehydrogenase (complex II, CII), ubiquinol-cytochrome c oxidoreductase (cytochrome b-c1 complex, complex III, CIII) and cytochrome c oxidase (complex IV, CIV), that cooperate to transfer electrons derived from NADH and succinate to molecular oxygen, creating an electrochemical gradient over the inner membrane that drives transmembrane transport and the ATP synthase. Cytochrome c oxidase is the component of the respiratory chain that catalyzes the reduction of oxygen to water. Electrons originating from reduced cytochrome c in the intermembrane space (IMS) are transferred via the dinuclear copper A center (CU(A)) of subunit 2 and heme A of subunit 1 to the active site in subunit 1, a binuclear center (BNC) formed by heme A3 and copper B (CU(B)). The BNC reduces molecular oxygen to 2 water molecules using 4 electrons from cytochrome c in the IMS and 4 protons from the mitochondrial matrix. The polypeptide is Cytochrome c oxidase subunit 2 (MT-CO2) (Ornithorhynchus anatinus (Duckbill platypus)).